The sequence spans 920 residues: Ubiquitin ligase-binding protein BUL2 (920 aa).

A compositionally biased stretch (polar residues) spans 1–10 (MTFTFSTSSR). Residues 1 to 89 (MTFTFSTSSR…EENSLEMDCT (89 aa)) are disordered. The residue at position 22 (threonine 22) is a Phosphothreonine. Residues 35–57 (QQLSSNSTDNSLHPNSGQTPRAS) show a composition bias toward polar residues. Basic and acidic residues predominate over residues 73 to 82 (DRLRQEREEN). The PY-motif motif lies at 129 to 133 (FPPSY). Serine 557 bears the Phosphoserine mark.

This sequence belongs to the BUL1 family. Component of the RSP5-BUL1/2 ubiquitin ligase complex composed of at least RSP5 and BUL1 or BUL2.

Its subcellular location is the cytoplasm. It participates in protein modification; protein ubiquitination. In terms of biological role, component of a RSP5 ubiquitin ligase complex which specifies polyubiquitination and intracellular trafficking of the general amino acid permease GAP1 as well as other permeases such as PMA1. The RSP5-BUL1/2 complex is also necessary for the heat-shock element (HSE)-mediated gene expression, nitrogen starvation GLN3-dependent transcription and pressure-induced differential regulation of the 2 tryptophan permeases TAT1 and TAT2. In Saccharomyces cerevisiae (strain ATCC 204508 / S288c) (Baker's yeast), this protein is Ubiquitin ligase-binding protein BUL2 (BUL2).